Reading from the N-terminus, the 359-residue chain is tRNA-specific 2-thiouridylase MnmA (359 aa).

ATP contacts are provided by residues 7–14 and Met-33; that span reads AMSGGVDS. Cys-101 acts as the Nucleophile in catalysis. Cysteines 101 and 198 form a disulfide. ATP is bound at residue Gly-125. Residues 148 to 150 form an interaction with tRNA region; it reads KDQ. Cys-198 acts as the Cysteine persulfide intermediate in catalysis.

It belongs to the MnmA/TRMU family.

The protein resides in the cytoplasm. It catalyses the reaction S-sulfanyl-L-cysteinyl-[protein] + uridine(34) in tRNA + AH2 + ATP = 2-thiouridine(34) in tRNA + L-cysteinyl-[protein] + A + AMP + diphosphate + H(+). Its function is as follows. Catalyzes the 2-thiolation of uridine at the wobble position (U34) of tRNA, leading to the formation of s(2)U34. The chain is tRNA-specific 2-thiouridylase MnmA from Chloroflexus aggregans (strain MD-66 / DSM 9485).